Consider the following 413-residue polypeptide: 4-hydroxy-3-methylbut-2-en-1-yl diphosphate synthase (flavodoxin) (413 aa).

[4Fe-4S] cluster-binding residues include Cys-305, Cys-308, Cys-351, and Glu-358.

This sequence belongs to the IspG family. [4Fe-4S] cluster is required as a cofactor.

The enzyme catalyses (2E)-4-hydroxy-3-methylbut-2-enyl diphosphate + oxidized [flavodoxin] + H2O + 2 H(+) = 2-C-methyl-D-erythritol 2,4-cyclic diphosphate + reduced [flavodoxin]. It participates in isoprenoid biosynthesis; isopentenyl diphosphate biosynthesis via DXP pathway; isopentenyl diphosphate from 1-deoxy-D-xylulose 5-phosphate: step 5/6. Converts 2C-methyl-D-erythritol 2,4-cyclodiphosphate (ME-2,4cPP) into 1-hydroxy-2-methyl-2-(E)-butenyl 4-diphosphate. This is 4-hydroxy-3-methylbut-2-en-1-yl diphosphate synthase (flavodoxin) from Bartonella tribocorum (strain CIP 105476 / IBS 506).